Reading from the N-terminus, the 290-residue chain is GTPase Era (290 aa).

In terms of domain architecture, Era-type G spans 2–168; it reads KVCIISILGR…IEILKEYAYN (167 aa). The segment at 10–17 is G1; it reads GRPNVGKS. A GTP-binding site is contributed by 10–17; it reads GRPNVGKS. Residues 36-40 are G2; the sequence is QTTRD. A G3 region spans residues 57–60; sequence DTPG. GTP is bound by residues 57–61 and 118–121; these read DTPGI and SKID. Positions 118 to 121 are G4; it reads SKID. The G5 stretch occupies residues 147–149; it reads VSN. Residues 199 to 275 enclose the KH type-2 domain; sequence LTDELPHSIA…TLNLKVKVSN (77 aa).

The protein belongs to the TRAFAC class TrmE-Era-EngA-EngB-Septin-like GTPase superfamily. Era GTPase family. As to quaternary structure, monomer.

It localises to the cytoplasm. The protein resides in the cell membrane. Its function is as follows. An essential GTPase that binds both GDP and GTP, with rapid nucleotide exchange. Plays a role in 16S rRNA processing and 30S ribosomal subunit biogenesis and possibly also in cell cycle regulation and energy metabolism. This Mycoplasmopsis agalactiae (strain NCTC 10123 / CIP 59.7 / PG2) (Mycoplasma agalactiae) protein is GTPase Era.